We begin with the raw amino-acid sequence, 845 residues long: SLIT and NTRK-like protein 2 (845 aa).

The first 21 residues, 1–21 (MLSGVWFLSVLTVAGILQTES), serve as a signal peptide directing secretion. The Extracellular segment spans residues 22–621 (RKTAKDICKI…LHTEVPLSVL (600 aa)). Intrachain disulfides connect cysteine 29–cysteine 35 and cysteine 33–cysteine 46. LRR repeat units lie at residues 63–84 (RIYQLFLNGNLLTRLYPNEFVN), 87–108 (NAVTLHLGNNGLQEIRTGAFSG), 111–132 (TLKRLHLNNNKLEILREDTFLG), 135–156 (SLEYLQADYNYISAIEAGAFSK), 159–180 (KLKVLILNDNLLLSLPSNVFRF), and 182–203 (LLTHLDLRGNRLKVMPFAGVLE). Asparagine 84 is a glycosylation site (N-linked (GlcNAc...) asparagine). The required for interaction with PTPRD stretch occupies residues 167–215 (DNLLLSLPSNVFRFVLLTHLDLRGNRLKVMPFAGVLEHIGGIMEIQLEE). The LRRCT 1 domain maps to 216-265 (NPWNCTCDLLPLKAWLDTITVFVGEIVCETPFRLHGKDVTQLTRQDLCPR). Disulfide bonds link cysteine 220/cysteine 243 and cysteine 222/cysteine 263. Residues 263–321 (CPRKSASDSSQRGSHADTHVQRLSPTMNPALNPTRAPKASRPPKMRNRPTPRVTVSKDR) are disordered. Residues 283 to 293 (QRLSPTMNPAL) show a composition bias toward polar residues. The LRRNT domain maps to 331–373 (QTKSPVPLTCPSSCVCTSQSSDNGLNVNCQERKFTNISDLQPK). LRR repeat units follow at residues 376–397 (SPKKLYLTGNYLQTVYKNDLLE), 400–421 (SLDLLHLGNNRIAVIQEGAFTN), 424–445 (SLRRLYLNGNYLEVLYPSMFDG), 448–469 (SLQYLYLEYNVIKEIKPLTFDA), 472–493 (NLQLLFLNNNLLRSLPDNIFGG), and 495–516 (ALTRLNLRNNHFSHLPVKGVLD). A glycan (N-linked (GlcNAc...) asparagine) is linked at asparagine 421. Residues 529-580 (NPWDCTCDIMGLKDWTEHANSPVIINEVTCESPAKHAGEILKFLGREAICPD) form the LRRCT 2 domain. A helical transmembrane segment spans residues 622–642 (ILGLLVVFILSVCFGAGLFVF). Residues 643-845 (VLKRRKGVPS…LEKQTAISQL (203 aa)) are Cytoplasmic-facing. Residue tyrosine 756 is modified to Phosphotyrosine.

Belongs to the SLITRK family. As to quaternary structure, interacts with PTPRD; this interaction is PTPRD splicing-dependent and may induce pre-synaptic differentiation. Interacts with NTRK2. As to expression, expressed predominantly in the cerebral cortex of the brain but also at low levels in the spinal cord and medulla. Also expressed in some astrocytic brain tumors such as astrocytomas, oligodendrogliomas, glioblastomas, gangliogliomas and primitive neuroectodermal tumors.

The protein resides in the membrane. It localises to the cell membrane. The protein localises to the cell projection. It is found in the dendrite. It is involved in synaptogenesis and promotes excitatory synapse differentiation. Suppresses neurite outgrowth. Involved in the negative regulation of NTRK2. The polypeptide is SLIT and NTRK-like protein 2 (SLITRK2) (Homo sapiens (Human)).